The sequence spans 457 residues: tRNA-2-methylthio-N(6)-dimethylallyladenosine synthase (457 aa).

One can recognise an MTTase N-terminal domain in the interval 2–119 (KKVFIKTFGC…LPELIDARRR (118 aa)). [4Fe-4S] cluster is bound by residues cysteine 11, cysteine 48, cysteine 82, cysteine 156, cysteine 160, and cysteine 163. Residues 142–375 (RVEGPSAFVS…QATIDANMAR (234 aa)) form the Radical SAM core domain. The TRAM domain occupies 378–448 (EGMVGSVQRI…PHSLRGDVVE (71 aa)).

This sequence belongs to the methylthiotransferase family. MiaB subfamily. In terms of assembly, monomer. The cofactor is [4Fe-4S] cluster.

The protein resides in the cytoplasm. It carries out the reaction N(6)-dimethylallyladenosine(37) in tRNA + (sulfur carrier)-SH + AH2 + 2 S-adenosyl-L-methionine = 2-methylsulfanyl-N(6)-dimethylallyladenosine(37) in tRNA + (sulfur carrier)-H + 5'-deoxyadenosine + L-methionine + A + S-adenosyl-L-homocysteine + 2 H(+). Functionally, catalyzes the methylthiolation of N6-(dimethylallyl)adenosine (i(6)A), leading to the formation of 2-methylthio-N6-(dimethylallyl)adenosine (ms(2)i(6)A) at position 37 in tRNAs that read codons beginning with uridine. The sequence is that of tRNA-2-methylthio-N(6)-dimethylallyladenosine synthase from Ralstonia nicotianae (strain ATCC BAA-1114 / GMI1000) (Ralstonia solanacearum).